The following is a 215-amino-acid chain: Small ribosomal subunit protein bS6 (215 aa).

2 disordered regions span residues 121-153 (RENN…QKPK) and 187-215 (NQRQ…KDKQ). Over residues 144 to 153 (SRTEKAQKPK) the composition is skewed to basic and acidic residues. The span at 188–198 (QRQNQQNNNNN) shows a compositional bias: low complexity. The segment covering 199–215 (RFDRNRNRQHNRFKDKQ) has biased composition (basic and acidic residues).

The protein belongs to the bacterial ribosomal protein bS6 family.

In terms of biological role, binds together with bS18 to 16S ribosomal RNA. The polypeptide is Small ribosomal subunit protein bS6 (rpsF) (Mycoplasma pneumoniae (strain ATCC 29342 / M129 / Subtype 1) (Mycoplasmoides pneumoniae)).